The sequence spans 254 residues: Urease accessory protein UreF (254 aa).

Residues Met1–Glu11 are compositionally biased toward basic and acidic residues. Residues Met1 to Asn25 are disordered.

Belongs to the UreF family. UreH, UreF and UreG form a complex that acts as a GTP-hydrolysis-dependent molecular chaperone, activating the urease apoprotein by helping to assemble the nickel containing metallocenter of UreC. The UreE protein probably delivers the nickel.

Its subcellular location is the cytoplasm. In terms of biological role, required for maturation of urease via the functional incorporation of the urease nickel metallocenter. In Helicobacter pylori (strain P12), this protein is Urease accessory protein UreF.